The primary structure comprises 177 residues: Small ribosomal subunit protein uS4 (177 aa).

The S4 RNA-binding domain maps to 104-166 (RRLQTIVYKK…PTSPFKQHPP (63 aa)). The disordered stretch occupies residues 158-177 (TSPFKQHPPTQQGEENVQQA). The segment covering 165-177 (PPTQQGEENVQQA) has biased composition (polar residues).

The protein belongs to the universal ribosomal protein uS4 family. As to quaternary structure, part of the 30S ribosomal subunit. Contacts protein S5. The interaction surface between S4 and S5 is involved in control of translational fidelity.

Its function is as follows. One of the primary rRNA binding proteins, it binds directly to 16S rRNA where it nucleates assembly of the body of the 30S subunit. With S5 and S12 plays an important role in translational accuracy. The sequence is that of Small ribosomal subunit protein uS4 from Sulfurisphaera tokodaii (strain DSM 16993 / JCM 10545 / NBRC 100140 / 7) (Sulfolobus tokodaii).